Here is a 198-residue protein sequence, read N- to C-terminus: uncharacterized protein (198 aa).

The protein localises to the cytoplasm. This is an uncharacterized protein from Saccharomyces cerevisiae (strain ATCC 204508 / S288c) (Baker's yeast).